An 84-amino-acid chain; its full sequence is ATP synthase subunit c (84 aa).

Transmembrane regions (helical) follow at residues 9 to 29 (LGLA…GCGI) and 57 to 77 (ILGL…NLII).

The protein belongs to the ATPase C chain family. F-type ATPases have 2 components, F(1) - the catalytic core - and F(0) - the membrane proton channel. F(1) has five subunits: alpha(3), beta(3), gamma(1), delta(1), epsilon(1). F(0) has three main subunits: a(1), b(2) and c(10-14). The alpha and beta chains form an alternating ring which encloses part of the gamma chain. F(1) is attached to F(0) by a central stalk formed by the gamma and epsilon chains, while a peripheral stalk is formed by the delta and b chains.

The protein resides in the cell membrane. Functionally, f(1)F(0) ATP synthase produces ATP from ADP in the presence of a proton or sodium gradient. F-type ATPases consist of two structural domains, F(1) containing the extramembraneous catalytic core and F(0) containing the membrane proton channel, linked together by a central stalk and a peripheral stalk. During catalysis, ATP synthesis in the catalytic domain of F(1) is coupled via a rotary mechanism of the central stalk subunits to proton translocation. Key component of the F(0) channel; it plays a direct role in translocation across the membrane. A homomeric c-ring of between 10-14 subunits forms the central stalk rotor element with the F(1) delta and epsilon subunits. This Lawsonia intracellularis (strain PHE/MN1-00) protein is ATP synthase subunit c.